We begin with the raw amino-acid sequence, 424 residues long: tRNA modification GTPase MnmE (424 aa).

R20, E77, and R117 together coordinate (6S)-5-formyl-5,6,7,8-tetrahydrofolate. A TrmE-type G domain is found at 212–351 (GVRVVFAGPP…LVRDLRDAAR (140 aa)). N222 contacts K(+). GTP-binding positions include 222 to 227 (NAGKST), 241 to 247 (SPIAGTT), and 266 to 269 (DTAG). S226 contributes to the Mg(2+) binding site. Residues S241, I243, and T246 each contribute to the K(+) site. Position 247 (T247) interacts with Mg(2+). Residue K424 participates in (6S)-5-formyl-5,6,7,8-tetrahydrofolate binding.

This sequence belongs to the TRAFAC class TrmE-Era-EngA-EngB-Septin-like GTPase superfamily. TrmE GTPase family. In terms of assembly, homodimer. Heterotetramer of two MnmE and two MnmG subunits. K(+) serves as cofactor.

Its subcellular location is the cytoplasm. In terms of biological role, exhibits a very high intrinsic GTPase hydrolysis rate. Involved in the addition of a carboxymethylaminomethyl (cmnm) group at the wobble position (U34) of certain tRNAs, forming tRNA-cmnm(5)s(2)U34. This chain is tRNA modification GTPase MnmE, found in Erythrobacter litoralis (strain HTCC2594).